We begin with the raw amino-acid sequence, 143 residues long: Transcriptional regulator MraZ (143 aa).

2 consecutive SpoVT-AbrB domains span residues 5 to 47 (TYTP…PKEE) and 76 to 119 (TDEQ…DKQA).

It belongs to the MraZ family. In terms of assembly, forms oligomers.

The protein localises to the cytoplasm. It is found in the nucleoid. The polypeptide is Transcriptional regulator MraZ (Nocardia farcinica (strain IFM 10152)).